We begin with the raw amino-acid sequence, 358 residues long: Protein FAM50 homolog (358 aa).

Residues 104–113 are compositionally biased toward basic and acidic residues; that stretch reads AKLAEKDRQK. A disordered region spans residues 104–151; the sequence is AKLAEKDRQKRQIQALSFDPDDEPDGDDANDGDEGSGKESEKEDVKEE. Positions 122–137 are enriched in acidic residues; it reads DPDDEPDGDDANDGDE. Residues 138–151 show a composition bias toward basic and acidic residues; the sequence is GSGKESEKEDVKEE.

This sequence belongs to the FAM50 family.

The chain is Protein FAM50 homolog from Anopheles gambiae (African malaria mosquito).